The following is a 161-amino-acid chain: CASP-like protein 1C2 (161 aa).

The Cytoplasmic segment spans residues 1-7; the sequence is MAKNTDR. A helical membrane pass occupies residues 8-28; the sequence is ICFLVLRLLAFGATLSAAIVM. The Extracellular segment spans residues 29-53; that stretch reads ATSHERTTYLSLSIEAKYSHTPAFK. The chain crosses the membrane as a helical span at residues 54–74; it reads YFVIANAIGSAYSLLLLFLPS. At 75-86 the chain is on the cytoplasmic side; that stretch reads HGSLWPLVIASD. A helical membrane pass occupies residues 87–107; that stretch reads VVITMFLTSSISAALSIAYVG. Residues 108–131 lie on the Extracellular side of the membrane; the sequence is KKGNSYAGWLPICDQVPNYCNHVT. A helical transmembrane segment spans residues 132–152; the sequence is GALAAGFIGVVLYMVLLQYSI. Residues 153-161 lie on the Cytoplasmic side of the membrane; it reads YTKCCKSSS.

The protein belongs to the Casparian strip membrane proteins (CASP) family. In terms of assembly, homodimer and heterodimers.

The protein localises to the cell membrane. This is CASP-like protein 1C2 from Vitis vinifera (Grape).